The primary structure comprises 50 residues: Conotoxin Bu13 (50 aa).

A signal peptide is located at residue Ala-1. Positions 2–24 (EDSRGTQLHRALRKTTKLSLSIR) are excised as a propeptide. Disulfide bonds link Cys-25-Cys-40, Cys-32-Cys-44, and Cys-39-Cys-49.

It belongs to the conotoxin O1 superfamily. In terms of tissue distribution, expressed by the venom duct.

The protein resides in the secreted. The chain is Conotoxin Bu13 from Conus bullatus (Bubble cone).